A 907-amino-acid polypeptide reads, in one-letter code: MYDQVPYRDTDEATPQIKNDASDSNRSSIDTTSTTSLILERLHREDPDDSPGEYESSGPSQRGKPDEDDDLEIGRAARLKPMERKVRRAMYLLAFLMIGGWFLALAVYVSREHFGTPDTAHDPSATATRKAGKKITLNQVMRGAWRSKTHGIQWINGPHGDQDGLLLTQNSFGDGNFLEVQDVKNDSNTIVLIKDGALQGSGQPVSAIKGWPSSDLKKVLVASDHEKRWRHSYNARYWIYDVEKATTEPLVPSEPEARLSLATWSPKGDAIAFVKDNNVFIRQLGLDLTSEYYSVTQVTKDGGPDLFYGIPDWVYEEEVFSGNSALWWSQDGEFLAFLRTNETEVPEYPIQYFVSRPSGNNPPNGLENYPELEFIKYPKAGAPNPVVHLRFYDLKKKEDFAVTVENDFPDDDRLITEVVWSDGKYLLVRETNRESDVLRMVLIDVSARSGKVVREVDISAIDGGWFEVSKNTRYIPADPASGRPYEGYIDTVIHEGYDHLGYFTPLDNKDPILLTKGQWEVVDAPSAVDLKNGIVYFVATEKSPIERHVYSVKLDGSNFRPVTSTSEDGRYDVSFSKLSGYALLTYEGPGIPWQKVVGTPSGDQSFVKDIEKNQGLATLAAKHELPTFHYSTVNIDGFDLHVVERRPPHFNKKRKYPVLFQVYGGPGSQQVSKSFSIDFQAYIAAGLEYIVVTVDGRGTGFIGRKARVAVRGNLGYWEAHDQIETAKIWGKKGYVDKKRIAIWGWSYGGFMTLKTLEQDAGRTFSYGMAVAPVTDWRFYDSIYTERYMHTPQHNQEGYRNATISDTQALSKSVRFLLMHGVADDNVHMQNSLALLDKLDLASVENYDVHVFPDSDHSIYFHNANRMVYDRLEQWLIRAFNGEFLKLDGLKPIREISEPLRKRNRELV.

The span at 1–11 (MYDQVPYRDTD) shows a compositional bias: basic and acidic residues. The tract at residues 1–71 (MYDQVPYRDT…RGKPDEDDDL (71 aa)) is disordered. The Cytoplasmic segment spans residues 1–88 (MYDQVPYRDT…LKPMERKVRR (88 aa)). Low complexity predominate over residues 22–36 (SDSNRSSIDTTSTTS). The helical; Signal-anchor for type II membrane protein transmembrane segment at 89–109 (AMYLLAFLMIGGWFLALAVYV) threads the bilayer. At 110–907 (SREHFGTPDT…PLRKRNRELV (798 aa)) the chain is on the vacuolar side. N185 and N341 each carry an N-linked (GlcNAc...) asparagine glycan. The active-site Charge relay system is the S746. The N-linked (GlcNAc...) asparagine glycan is linked to N800. Catalysis depends on charge relay system residues D823 and H856.

It belongs to the peptidase S9B family.

It localises to the vacuole membrane. The catalysed reaction is Release of an N-terminal dipeptide, Xaa-Yaa-|-Zaa-, from a polypeptide, preferentially when Yaa is Pro, provided Zaa is neither Pro nor hydroxyproline.. In terms of biological role, type IV dipeptidyl-peptidase which removes N-terminal dipeptides sequentially from polypeptides having unsubstituted N-termini provided that the penultimate residue is proline. This is Probable dipeptidyl-aminopeptidase B (DAPB) from Tuber melanosporum (strain Mel28) (Perigord black truffle).